The following is a 221-amino-acid chain: 5-methylthioribulose-1-phosphate/5-deoxyribulose-1-phosphate aldolase (221 aa).

Catalysis depends on E75, which acts as the Proton donor/acceptor. Residues E75, H94, H96, and H157 each coordinate Co(2+).

The protein belongs to the aldolase class II family. Requires Co(2+) as cofactor.

The catalysed reaction is 5-(methylsulfanyl)-D-ribulose 1-phosphate = 2-(methylsulfanyl)acetaldehyde + dihydroxyacetone phosphate. It carries out the reaction 5-deoxy-D-ribulose 1-phosphate = dihydroxyacetone phosphate + acetaldehyde. It participates in amino-acid biosynthesis; L-methionine biosynthesis via salvage pathway. Uses 5-methylthioribulose-1-phosphate to yield 2-(methylthio)acetaldehyde and dihydroxyacetone phosphate. Can also use 5-deoxyribulose 1-phosphate to yield acetaldehyde and dihydroxyacetone phosphate. Part of a bifunctional DHAP-shunt salvage pathway for SAM by-products. This chain is 5-methylthioribulose-1-phosphate/5-deoxyribulose-1-phosphate aldolase, found in Rhodospirillum rubrum (strain ATCC 11170 / ATH 1.1.1 / DSM 467 / LMG 4362 / NCIMB 8255 / S1).